A 447-amino-acid polypeptide reads, in one-letter code: UPF0328 protein ECU10_1870 (447 aa).

Basic and acidic residues-rich tracts occupy residues 1–10 and 64–84; these read MPSDHPDFRS and HTEG…HTET. 2 disordered regions span residues 1 to 103 and 147 to 173; these read MPSD…TATP and VKSQ…NPRI. A compositionally biased stretch (pro residues) spans 92 to 103; the sequence is CPPPHPGPTATP.

The protein belongs to the UPF0328 family.

The protein is UPF0328 protein ECU10_1870 of Encephalitozoon cuniculi (strain GB-M1) (Microsporidian parasite).